A 161-amino-acid polypeptide reads, in one-letter code: UPF0178 protein BR1979/BS1330_I1973 (161 aa).

It belongs to the UPF0178 family.

This Brucella suis biovar 1 (strain 1330) protein is UPF0178 protein BR1979/BS1330_I1973.